Consider the following 336-residue polypeptide: Succinylglutamate desuccinylase (336 aa).

Residues histidine 59, glutamate 62, and histidine 151 each coordinate Zn(2+). Residue glutamate 215 is part of the active site.

The protein belongs to the AspA/AstE family. Succinylglutamate desuccinylase subfamily. The cofactor is Zn(2+).

The catalysed reaction is N-succinyl-L-glutamate + H2O = L-glutamate + succinate. It functions in the pathway amino-acid degradation; L-arginine degradation via AST pathway; L-glutamate and succinate from L-arginine: step 5/5. In terms of biological role, transforms N(2)-succinylglutamate into succinate and glutamate. The polypeptide is Succinylglutamate desuccinylase (Pseudomonas fluorescens (strain Pf0-1)).